We begin with the raw amino-acid sequence, 308 residues long: Probable very-long-chain enoyl-CoA reductase art-1 (308 aa).

The region spanning 7-85 (VYDAKRTDNL…VLYVRDLGPQ (79 aa)) is the Ubiquitin-like domain. 4 consecutive transmembrane segments (helical) span residues 112–132 (FIYGQAAVNATMHPAVQIAFF), 169–189 (WGFAAFVAYFVNHPLFTPPAF), 194–214 (VYFGLAGFVISEFGNLSIHIL), and 255–275 (WIFFSIMVQSLPAIIFTTAGF).

It belongs to the steroid 5-alpha reductase family.

Its subcellular location is the endoplasmic reticulum membrane. The catalysed reaction is a very-long-chain 2,3-saturated fatty acyl-CoA + NADP(+) = a very-long-chain (2E)-enoyl-CoA + NADPH + H(+). Its pathway is lipid metabolism; fatty acid biosynthesis. Catalyzes the last of the four reactions of the long-chain fatty acids elongation cycle. This endoplasmic reticulum-bound enzymatic process, allows the addition of 2 carbons to the chain of long- and very long-chain fatty acids/VLCFAs per cycle. This enzyme reduces the trans-2,3-enoyl-CoA fatty acid intermediate to an acyl-CoA that can be further elongated by entering a new cycle of elongation. Thereby, it participates in the production of VLCFAs of different chain lengths that are involved in multiple biological processes as precursors of membrane lipids and lipid mediators. The polypeptide is Probable very-long-chain enoyl-CoA reductase art-1 (art-1) (Caenorhabditis elegans).